We begin with the raw amino-acid sequence, 372 residues long: Alpha-parvin (372 aa).

Positions methionine 1–valine 11 are enriched in low complexity. The interval methionine 1–lysine 44 is disordered. Alanine 2 carries the post-translational modification N-acetylalanine. A phosphoserine mark is found at serine 8, serine 14, and serine 19. The interaction with ARHGAP31 stretch occupies residues proline 21–lysine 25. 2 positions are modified to phosphoserine: serine 28 and serine 62. 2 Calponin-homology (CH) domains span residues glutamine 95 to arginine 202 and asparagine 262 to arginine 369. Residues glycine 223 to glutamate 372 form a required for interaction with TESK1 and ILK region.

This sequence belongs to the parvin family. Component of the heterotrimeric IPP (ILK-PINCH-PARVIN) complex composed of ILK, LIMS1/PINCH and PARVA; the complex binds to F-actin via the C-terminal tail of LIMS1 and the N-terminal region of PARVA, promoting F-actin filament bundling. Interacts with TGFB1I1. Interacts with ARHGAP31. Interacts with the actin cytoskeleton. Interacts (via C-terminus) with TESK1 (via C-terminus); the interaction inhibits TESK1 kinase activity. Interacts with PXN/PAXILLIN (via LD motif 4). Widely expressed.

The protein localises to the cell junction. The protein resides in the focal adhesion. Its subcellular location is the cell membrane. It localises to the cytoplasm. It is found in the cytoskeleton. The protein localises to the myofibril. The protein resides in the sarcomere. Its subcellular location is the z line. In terms of biological role, plays a role in sarcomere organization and in smooth muscle cell contraction. Required for normal development of the embryonic cardiovascular system, and for normal septation of the heart outflow tract. Plays a role in sprouting angiogenesis and is required for normal adhesion of vascular smooth muscle cells to endothelial cells during blood vessel development. Plays a role in the reorganization of the actin cytoskeleton, formation of lamellipodia and ciliogenesis. Plays a role in the establishment of cell polarity, cell adhesion, cell spreading, and directed cell migration. Within the IPP (ILK-PINCH-PARVIN) complex, binds to F-actin, promoting F-actin bundling, a process required to generate force for actin cytoskeleton reorganization and subsequent dynamic cell adhesion events such as cell spreading and migration. This Rattus norvegicus (Rat) protein is Alpha-parvin (Parva).